Here is a 730-residue protein sequence, read N- to C-terminus: Translation factor GUF1 homolog, mitochondrial (730 aa).

The tr-type G domain maps to 106-289 (ELIRNFCIIA…AVVVSIPPPK (184 aa)). Residues 115–122 (AHVDHGKS), 182–186 (DTPGH), and 236–239 (NKID) contribute to the GTP site.

Belongs to the TRAFAC class translation factor GTPase superfamily. Classic translation factor GTPase family. LepA subfamily.

The protein localises to the mitochondrion inner membrane. It carries out the reaction GTP + H2O = GDP + phosphate + H(+). Its function is as follows. Promotes mitochondrial protein synthesis. May act as a fidelity factor of the translation reaction, by catalyzing a one-codon backward translocation of tRNAs on improperly translocated ribosomes. Binds to mitochondrial ribosomes in a GTP-dependent manner. This is Translation factor GUF1 homolog, mitochondrial from Theileria annulata.